Reading from the N-terminus, the 313-residue chain is Secretory carrier-associated membrane protein 4 (313 aa).

Residues 1–69 (MAGRSRYDNP…LPPEPADFYN (69 aa)) form a disordered region. Residues 1-148 (MAGRSRYDNP…EIPVHLQRTQ (148 aa)) lie on the Cytoplasmic side of the membrane. Positions 85–116 (MKTREKELLAKEAELNRREKEIKRREEAAARA) form a coiled coil. A run of 4 helical transmembrane segments spans residues 149-169 (YVAF…IICV), 181-201 (IWFL…YLWY), 216-236 (FGWF…AAVS), and 255-275 (LIGN…MFCL). The Cytoplasmic segment spans residues 276-313 (ESLLSMWVIQRVYLYFRGSGKEAEMKREAARSAARAAF).

Belongs to the SCAMP family.

The protein resides in the cell membrane. It is found in the cytoplasmic vesicle. The protein localises to the secretory vesicle membrane. Probably involved in membrane trafficking. The protein is Secretory carrier-associated membrane protein 4 (SCAMP4) of Oryza sativa subsp. japonica (Rice).